A 707-amino-acid chain; its full sequence is Ribosome biogenesis protein ENP2 (707 aa).

WD repeat units follow at residues 54-94, 178-217, 226-265, 269-310, and 312-351; these read EFSE…LKFD, LDTE…RVSK, NRPF…PSII, GYGF…AYAS, and EPSV…PSPR. Residues 523–707 are disordered; the sequence is LTAAEESDEE…RASKNAFRGM (185 aa). The residue at position 529 (S529) is a Phosphoserine. Residues 532–544 show a composition bias toward basic and acidic residues; it reads ERIAMKDGRGHYD. Acidic residues predominate over residues 545–558; that stretch reads YEDEESDEEESDDE. 2 positions are modified to phosphoserine: S550 and S555. Basic and acidic residues-rich tracts occupy residues 559 to 598, 629 to 647, 659 to 671, and 680 to 697; these read TNQK…RFMN, ENGK…RGEA, KDGN…HDNS, and NGNK…ENRR.

This sequence belongs to the WD repeat NOL10/ENP2 family. As to quaternary structure, component of the 90S pre-ribosomes.

It is found in the nucleus. The protein localises to the nucleolus. May be involved in rRNA-processing and ribosome biosynthesis. In Saccharomyces cerevisiae (strain ATCC 204508 / S288c) (Baker's yeast), this protein is Ribosome biogenesis protein ENP2 (ENP2).